An 801-amino-acid polypeptide reads, in one-letter code: Putative mRNA-capping enzyme P5 (801 aa).

Belongs to the phytoreovirus protein P5 family.

Its subcellular location is the virion. The protein localises to the host cytoplasm. It catalyses the reaction a 5'-end diphospho-ribonucleoside in mRNA + GTP + H(+) = a 5'-end (5'-triphosphoguanosine)-ribonucleoside in mRNA + diphosphate. It participates in mRNA processing; mRNA capping. Enzyme involved in mRNA capping (Potential). Binds to GTP and might have guanylyltransferase activity. Together with the RNA-directed RNA polymerase P1 and protein P7, forms an transcriptional complex positioned near the channels situated at each of the five-fold vertices of the core. The sequence is that of Putative mRNA-capping enzyme P5 from Alopecurus aequalis (Barnyard grass).